A 442-amino-acid chain; its full sequence is 3-phosphoshikimate 1-carboxyvinyltransferase (442 aa).

3-phosphoshikimate contacts are provided by Lys23, Ser24, and Arg28. Lys23 is a binding site for phosphoenolpyruvate. Residues Gly95 and Arg123 each contribute to the phosphoenolpyruvate site. 4 residues coordinate 3-phosphoshikimate: Ser167, Gln169, Asp315, and Lys342. Phosphoenolpyruvate is bound at residue Gln169. The Proton acceptor role is filled by Asp315. 2 residues coordinate phosphoenolpyruvate: Arg346 and Arg390.

The protein belongs to the EPSP synthase family. In terms of assembly, monomer.

It localises to the cytoplasm. It carries out the reaction 3-phosphoshikimate + phosphoenolpyruvate = 5-O-(1-carboxyvinyl)-3-phosphoshikimate + phosphate. It participates in metabolic intermediate biosynthesis; chorismate biosynthesis; chorismate from D-erythrose 4-phosphate and phosphoenolpyruvate: step 6/7. Functionally, catalyzes the transfer of the enolpyruvyl moiety of phosphoenolpyruvate (PEP) to the 5-hydroxyl of shikimate-3-phosphate (S3P) to produce enolpyruvyl shikimate-3-phosphate and inorganic phosphate. In Dichelobacter nodosus (strain VCS1703A), this protein is 3-phosphoshikimate 1-carboxyvinyltransferase.